Consider the following 759-residue polypeptide: Spindle pole body component alp16 (759 aa).

As to quaternary structure, interacts with gamma-tubulin.

Its subcellular location is the cytoplasm. The protein localises to the cytoskeleton. The protein resides in the microtubule organizing center. It is found in the spindle pole body. Its function is as follows. Component of the gamma tubule complex that is required for the regulation of both interphase microtubules and mitotic bipolar spindles. This chain is Spindle pole body component alp16 (alp16), found in Schizosaccharomyces pombe (strain 972 / ATCC 24843) (Fission yeast).